The following is a 491-amino-acid chain: Protein nucleotidyltransferase YdiU (491 aa).

Glycine 92, glycine 94, arginine 95, lysine 115, aspartate 127, glycine 128, arginine 178, and arginine 185 together coordinate ATP. The active-site Proton acceptor is the aspartate 254. Mg(2+)-binding residues include asparagine 255 and aspartate 264. Residue aspartate 264 participates in ATP binding.

The protein belongs to the SELO family. Requires Mg(2+) as cofactor. It depends on Mn(2+) as a cofactor.

The enzyme catalyses L-seryl-[protein] + ATP = 3-O-(5'-adenylyl)-L-seryl-[protein] + diphosphate. The catalysed reaction is L-threonyl-[protein] + ATP = 3-O-(5'-adenylyl)-L-threonyl-[protein] + diphosphate. It carries out the reaction L-tyrosyl-[protein] + ATP = O-(5'-adenylyl)-L-tyrosyl-[protein] + diphosphate. It catalyses the reaction L-histidyl-[protein] + UTP = N(tele)-(5'-uridylyl)-L-histidyl-[protein] + diphosphate. The enzyme catalyses L-seryl-[protein] + UTP = O-(5'-uridylyl)-L-seryl-[protein] + diphosphate. The catalysed reaction is L-tyrosyl-[protein] + UTP = O-(5'-uridylyl)-L-tyrosyl-[protein] + diphosphate. Its function is as follows. Nucleotidyltransferase involved in the post-translational modification of proteins. It can catalyze the addition of adenosine monophosphate (AMP) or uridine monophosphate (UMP) to a protein, resulting in modifications known as AMPylation and UMPylation. This chain is Protein nucleotidyltransferase YdiU, found in Pseudarthrobacter chlorophenolicus (strain ATCC 700700 / DSM 12829 / CIP 107037 / JCM 12360 / KCTC 9906 / NCIMB 13794 / A6) (Arthrobacter chlorophenolicus).